The primary structure comprises 782 residues: Zinc finger Y-chromosomal protein 1 (782 aa).

Disordered regions lie at residues 211–233 (ADLEGSSEVTMNAESGTDSSKLD) and 360–386 (LNQDESGGLDRVPKQKSKKKKRPESKQ). Positions 217-229 (SEVTMNAESGTDS) are enriched in polar residues. The Nuclear localization signal motif lies at 372-382 (PKQKSKKKKRP). Residues 373-382 (KQKSKKKKRP) are compositionally biased toward basic residues. 13 C2H2-type zinc fingers span residues 403 to 425 (YPCMFCGKKFKTKRFLKRHTKNH), 434 to 456 (YHCTECDYSTNKKISLHNHMESH), 466 to 488 (TECDDCRKNLSHAGTLCTHKTMH), 497 to 520 (CKCKFCDYETAEQTLLNHHLLVVH), 526 to 548 (HICGECGKGFRHPSALKKHIRVH), 554 to 577 (YECQYCEYKSADSSNLKTHIKSKH), 583 to 605 (LKCGICLLTFSDNKEAQQHAVLH), 611 to 634 (HQCSHCNHKSSNSSDLKRHIISVH), 640 to 662 (HKCDMCSKGFHRPSELKKHVATH), 668 to 691 (HQCRHCDFNSPDPFLLSHHILSAH), 697 to 719 (FKCKRCKKEFQQQCELQTHMKTH), 725 to 748 (YQCEYCEYSTKDASGFKRHVISIH), and 754 to 777 (HSCDFCKKGFRRPSEKNQHIMRHH).

This sequence belongs to the krueppel C2H2-type zinc-finger protein family. ZFX/ZFY subfamily.

Its subcellular location is the nucleus. In terms of biological role, probable transcriptional activator. Binds to the consensus sequence 5'-AGGCCY-3'. The polypeptide is Zinc finger Y-chromosomal protein 1 (Zfy1) (Mus musculus (Mouse)).